Consider the following 408-residue polypeptide: uncharacterized protein (408 aa).

12 helical membrane-spanning segments follow: residues 9–29 (WFVLLFTFVFAIGMNSFRNSF), 49–69 (VSVSIFMITTGIVQFFVGFFI), 77–97 (IMALGAVCISASFLVLPYSPN), 100–120 (VFSAIYGVLGGIGYSCAVGVT), 135–155 (LALAILTNANSAGLLLLSPIW), 167–187 (TYTILGIVMAAVLLPLLVFGM), 216–236 (LIHILYFGVFTCGFTMGIIDA), 252–272 (GMMAAFGAFIIIGGLLAGWLS), 283–303 (SILFFIRLLSLICLLIPILGI), 308–328 (LWYFGFILLFGLSYTGVIPLT), 340–360 (LIGSLLGINFFIHQVAGALSV), and 373–393 (YLLIVAVCIVFVGLSAVIELV).

It belongs to the major facilitator superfamily.

The protein resides in the cell membrane. This is an uncharacterized protein from Bacillus subtilis (strain 168).